A 430-amino-acid chain; its full sequence is MNVKVENIEKNVVKLEITVDSEKFNEAVKKSFKKNAKRFNVPGFRKGKAPLNIIKKYYGEGVLFEDAINFCCEDTYPKAIEENNIKPVDYPQIDVVQIGEGKDFIYTAEVTTVPEVKLGEYKGVEVKKVSYEVEDEAVENELKSMQEKNARVSLKEEGEIEKGNIAIIDFKGYVDGKAFEGGEAKDYEIEIGSGTFIGDFEDQLVGLKKDESKEVNVSFPEEYGREDLNGKPATFEATIKDIKVKELPALDDEFAKEVSEFDTLEELKSDIKDRMKKELSEKAKAEYEEAVVEAVGANAEIEIPKVMIEKEIENMVRDLEMRLKYQGLDLKSYYEFTNSSEEKVKEYMRETAEKRVKTDLIMQEIAKVEDIKATEEELKEKAMEVAKQYGQKDVEKTAELIANAQKAYLEIDIVNGKVLDLLVENSKEIA.

One can recognise a PPIase FKBP-type domain in the interval 163-248 (GNIAIIDFKG…IKDIKVKELP (86 aa)).

This sequence belongs to the FKBP-type PPIase family. Tig subfamily.

Its subcellular location is the cytoplasm. It catalyses the reaction [protein]-peptidylproline (omega=180) = [protein]-peptidylproline (omega=0). Its function is as follows. Involved in protein export. Acts as a chaperone by maintaining the newly synthesized protein in an open conformation. Functions as a peptidyl-prolyl cis-trans isomerase. This Clostridium botulinum (strain Langeland / NCTC 10281 / Type F) protein is Trigger factor.